Consider the following 168-residue polypeptide: uncharacterized protein (168 aa).

This is an uncharacterized protein from Escherichia coli (strain K12).